The chain runs to 118 residues: Basic phospholipase A2 acanthin-2 (118 aa).

Intrachain disulfides connect Cys-11-Cys-71, Cys-27-Cys-117, Cys-29-Cys-45, Cys-44-Cys-98, Cys-51-Cys-91, Cys-60-Cys-84, and Cys-78-Cys-89. Ca(2+) is bound by residues Tyr-28, Gly-30, and Gly-32. His-48 is an active-site residue. Asp-49 serves as a coordination point for Ca(2+). Residue Asp-92 is part of the active site.

Requires Ca(2+) as cofactor. As to expression, expressed by the venom gland.

The protein localises to the secreted. The enzyme catalyses a 1,2-diacyl-sn-glycero-3-phosphocholine + H2O = a 1-acyl-sn-glycero-3-phosphocholine + a fatty acid + H(+). Functionally, snake venom phospholipase A2 (PLA2) that potently inhibits ADP-(IC(50)=12 nM) and collagen-induced (IC(50)=4 nM) platelet aggregation when tested on human whole blood. PLA2 catalyzes the calcium-dependent hydrolysis of the 2-acyl groups in 3-sn-phosphoglycerides. This is Basic phospholipase A2 acanthin-2 from Acanthophis antarcticus (Common death adder).